The following is a 126-amino-acid chain: RxLR effector protein BLR31 (126 aa).

The N-terminal stretch at 1–22 (MLLSRAISVLALLACIRCGVHA) is a signal peptide. Positions 44–58 (RLLRTSVDFKDSEER) match the RxLR-dEER motif.

This sequence belongs to the RxLR effector family.

It localises to the secreted. It is found in the host cell. Functionally, secreted effector that triggers a hypersensitive response (HR) in 3 Lactuca saligna accessions (CGN05947, CGN05310, CGN05304). In Bremia lactucae (Lettuce downy mildew), this protein is RxLR effector protein BLR31.